We begin with the raw amino-acid sequence, 129 residues long: Large ribosomal subunit protein uL22 (129 aa).

This sequence belongs to the universal ribosomal protein uL22 family. In terms of assembly, part of the 50S ribosomal subunit.

Functionally, this protein binds specifically to 23S rRNA; its binding is stimulated by other ribosomal proteins, e.g. L4, L17, and L20. It is important during the early stages of 50S assembly. It makes multiple contacts with different domains of the 23S rRNA in the assembled 50S subunit and ribosome. Its function is as follows. The globular domain of the protein is located near the polypeptide exit tunnel on the outside of the subunit, while an extended beta-hairpin is found that lines the wall of the exit tunnel in the center of the 70S ribosome. The polypeptide is Large ribosomal subunit protein uL22 (Brucella suis biovar 1 (strain 1330)).